A 298-amino-acid chain; its full sequence is Probable 2-(5''-triphosphoribosyl)-3'-dephosphocoenzyme-A synthase 2 (298 aa).

This sequence belongs to the CitG/MdcB family.

It catalyses the reaction 3'-dephospho-CoA + ATP = 2'-(5''-triphospho-alpha-D-ribosyl)-3'-dephospho-CoA + adenine. In Salmonella choleraesuis (strain SC-B67), this protein is Probable 2-(5''-triphosphoribosyl)-3'-dephosphocoenzyme-A synthase 2.